The primary structure comprises 149 residues: MLRTVIVAGALVLTASAVMAQQDLVDKTQKLMKDNGRNMMVLGAIAKGEKPYDQAAVDAALKQFDETAKDLPKLFPDSVKGLKPFDSKYSSSPKIWAERAKFDTEIADFAKAVDGAKGKIKDVDTLKAAMQPIGKACGNCHENFRDKEG.

Positions 1-20 (MLRTVIVAGALVLTASAVMA) are cleaved as a signal peptide. Positions 32, 137, 140, and 141 each coordinate heme c.

In terms of assembly, monomer. In terms of processing, binds 1 heme c group covalently per subunit.

Its function is as follows. Low-spin monoheme cytochrome c. This chain is Cytochrome c-556, found in Rhodopseudomonas palustris (strain ATCC BAA-98 / CGA009).